The primary structure comprises 548 residues: Polynucleotide 5'-hydroxyl-kinase nol-9 (548 aa).

ATP is bound at residue 186-193; the sequence is GHKGAGKS.

The protein belongs to the Clp1 family. NOL9/GRC3 subfamily.

Its subcellular location is the nucleus. It localises to the nucleolus. Its function is as follows. Polynucleotide 5'-kinase involved in rRNA processing. The protein is Polynucleotide 5'-hydroxyl-kinase nol-9 (nol-9) of Caenorhabditis briggsae.